A 192-amino-acid polypeptide reads, in one-letter code: Thymidine kinase (192 aa).

ATP-binding positions include 9 to 16 (SAMNAGKS) and 87 to 90 (DECQ). Catalysis depends on Glu88, which acts as the Proton acceptor. Zn(2+) contacts are provided by Cys145, Cys147, Cys182, and His185.

The protein belongs to the thymidine kinase family. In terms of assembly, homotetramer.

It is found in the cytoplasm. The enzyme catalyses thymidine + ATP = dTMP + ADP + H(+). In Vibrio vulnificus (strain YJ016), this protein is Thymidine kinase.